Reading from the N-terminus, the 301-residue chain is Thioredoxin-related transmembrane protein 2-A (301 aa).

An N-terminal signal peptide occupies residues 1–19 (MSLIRGLISTIYYLPKIYK). Residues 20-111 (WFYRPYYFLS…VVLFFRVDLR (92 aa)) are Extracellular-facing. Residues 112–132 (FGLLYLTLCVVFLITCKPPAY) form a helical membrane-spanning segment. Residues 122–269 (VFLITCKPPA…IFQKYKKFSK (148 aa)) enclose the Thioredoxin domain. Over 133–301 (MGPENIKYFR…EEDSESKKDK (169 aa)) the chain is Cytoplasmic. A disordered region spans residues 268-301 (SKGEKPEEPQPVLEEESESPLEEEEEDSESKKDK). The segment covering 280-295 (LEEESESPLEEEEEDS) has biased composition (acidic residues). A Di-lysine motif motif is present at residues 298–301 (KKDK).

In terms of assembly, monomer. Homodimer; disulfide-linked. Occurs in both reduced and oxidized monomeric form. Oxidative conditions increase homodimerization.

It localises to the endoplasmic reticulum membrane. The protein resides in the mitochondrion membrane. Its function is as follows. Endoplasmic reticulum and mitochondria-associated protein that probably functions as a regulator of cellular redox state and thereby regulates protein post-translational modification, protein folding and mitochondrial activity. The sequence is that of Thioredoxin-related transmembrane protein 2-A from Danio rerio (Zebrafish).